The chain runs to 295 residues: MVKRNNNNSINYEINKIIPVQTTKDINSKREKEIHVQIKKINSNRTFVYENIHRHILLVLENFGSTKNLFLVLSDCLATLKGYDSQEYQLQLELQTISDSTTTTTTNTVSTVATASTSKTATSKNVISNIENNTNKSQPLESNDLTPPSSKSSNSSPSTSPSKRVSKSKTRVTKKPNQVISTSSSGETENLTTTSTADTTATTDTADTTDGTNTRTSNTSSDDTTTESTKKRGRPSKIQPDSCYVCRRTFTSYWRKGIFNDQNEDLCNPCGLNYLKKGKKEQISKNQNSIHNILN.

Low complexity predominate over residues 115-126 (ASTSKTATSKNV). The tract at residues 115–240 (ASTSKTATSK…KRGRPSKIQP (126 aa)) is disordered. The span at 127 to 145 (ISNIENNTNKSQPLESNDL) shows a compositional bias: polar residues. The segment covering 146-163 (TPPSSKSSNSSPSTSPSK) has biased composition (low complexity). Basic residues predominate over residues 164-174 (RVSKSKTRVTK). Low complexity predominate over residues 181–227 (STSSSGETENLTTTSTADTTATTDTADTTDGTNTRTSNTSSDDTTTE). The a.T hook DNA-binding region spans 229-241 (TKKRGRPSKIQPD). The GATA-type zinc finger occupies 243-270 (CYVCRRTFTSYWRKGIFNDQNEDLCNPC).

The sequence is that of GATA zinc finger domain-containing protein 23 (gtaW) from Dictyostelium discoideum (Social amoeba).